A 160-amino-acid chain; its full sequence is Gene 34 protein (160 aa).

Polar residues predominate over residues 1–11 (MDSPRGISTAT). The segment at 1–26 (MDSPRGISTATGDAHAEAAVSPAAEI) is disordered.

The sequence is that of Gene 34 protein from Equus caballus (Horse).